The sequence spans 230 residues: Cytochrome c-552 (230 aa).

An N-terminal signal peptide occupies residues 1 to 47 (MTTYLSQDRLRNKENDTMTYQHSKMYQSRTFLLFSALLLVAGQASAA). 6 residues coordinate heme c: C63, C66, H67, C166, C169, and H170.

In terms of processing, binds 2 heme c groups covalently per subunit.

The protein resides in the periplasm. Diheme, high potential cytochrome c. This is Cytochrome c-552 (cyc1) from Acidithiobacillus ferridurans.